The primary structure comprises 188 residues: Phosphoribosylglycinamide formyltransferase (188 aa).

12–14 (GSN) serves as a coordination point for N(1)-(5-phospho-beta-D-ribosyl)glycinamide. (6R)-10-formyltetrahydrofolate-binding positions include Lys66, 91 to 94 (MRLI), and Asn108. His110 (proton donor) is an active-site residue.

The protein belongs to the GART family.

The catalysed reaction is N(1)-(5-phospho-beta-D-ribosyl)glycinamide + (6R)-10-formyltetrahydrofolate = N(2)-formyl-N(1)-(5-phospho-beta-D-ribosyl)glycinamide + (6S)-5,6,7,8-tetrahydrofolate + H(+). It functions in the pathway purine metabolism; IMP biosynthesis via de novo pathway; N(2)-formyl-N(1)-(5-phospho-D-ribosyl)glycinamide from N(1)-(5-phospho-D-ribosyl)glycinamide (10-formyl THF route): step 1/1. In terms of biological role, catalyzes the transfer of a formyl group from 10-formyltetrahydrofolate to 5-phospho-ribosyl-glycinamide (GAR), producing 5-phospho-ribosyl-N-formylglycinamide (FGAR) and tetrahydrofolate. The sequence is that of Phosphoribosylglycinamide formyltransferase from Staphylococcus aureus (strain COL).